We begin with the raw amino-acid sequence, 416 residues long: Histone acetyltransferase type B catalytic subunit (416 aa).

Position 2 is an N-acetylalanine (Ala-2). Residues Lys-6 and Lys-12 each carry the N6-acetyllysine modification. Residues 59–61 (DDE) form an interaction with histone H4 N-terminus region. Phosphoserine is present on Ser-187. The segment at 222–224 (YNY) is interaction with histone H4 N-terminus. Residues 238–240 (MLI) and 245–251 (QGQGHGA) contribute to the acetyl-CoA site. Glu-273 serves as the catalytic Proton donor/acceptor. Ser-340 carries the post-translational modification Phosphoserine.

The protein belongs to the HAT1 family. In terms of assembly, catalytic subunit of the type B histone acetyltransferase (HAT) complex, composed of RBBP7 and HAT1. Interacts with histones H4 and H2A. The interaction is dependent of the ability of RBBP7 to bind to the N-terminus of histones. Component of the histone H3.1 and H3.3 complexes. Post-translationally, phosphorylated by AMPK at Ser-187; phosphorylation increases HAT1 activity.

The protein localises to the nucleus matrix. It is found in the mitochondrion. It catalyses the reaction L-lysyl-[protein] + acetyl-CoA = N(6)-acetyl-L-lysyl-[protein] + CoA + H(+). In terms of biological role, histone acetyltransferase that plays a role in different biological processes including cell cycle progression, glucose metabolism, histone production or DNA damage repair. Coordinates histone production and acetylation via H4 promoter binding. Acetylates histone H4 at 'Lys-5' (H4K5ac) and 'Lys-12' (H4K12ac) and, to a lesser extent, histone H2A at 'Lys-5' (H2AK5ac). Drives H4 production by chromatin binding to support chromatin replication and acetylation. Since transcription of H4 genes is tightly coupled to S-phase, plays an important role in S-phase entry and progression. Promotes homologous recombination in DNA repair by facilitating histone turnover and incorporation of acetylated H3.3 at sites of double-strand breaks. In addition, acetylates other substrates such as chromatin-related proteins. Also acetylates RSAD2 which mediates the interaction of ubiquitin ligase UBE4A with RSAD2 leading to RSAD2 ubiquitination and subsequent degradation. This is Histone acetyltransferase type B catalytic subunit (Hat1) from Mus musculus (Mouse).